Here is a 377-residue protein sequence, read N- to C-terminus: Protein RecA (377 aa).

Position 66 to 73 (66 to 73 (GPESSGKT)) interacts with ATP. Positions 329–377 (VGVRPEEPTAEPGADAAVTSAAAATDDTAKTVSAPAAKTTKSKAAAAKS) are disordered. A compositionally biased stretch (low complexity) spans 342–377 (ADAAVTSAAAATDDTAKTVSAPAAKTTKSKAAAAKS).

Belongs to the RecA family.

It localises to the cytoplasm. Functionally, can catalyze the hydrolysis of ATP in the presence of single-stranded DNA, the ATP-dependent uptake of single-stranded DNA by duplex DNA, and the ATP-dependent hybridization of homologous single-stranded DNAs. It interacts with LexA causing its activation and leading to its autocatalytic cleavage. The sequence is that of Protein RecA from Streptomyces avermitilis (strain ATCC 31267 / DSM 46492 / JCM 5070 / NBRC 14893 / NCIMB 12804 / NRRL 8165 / MA-4680).